A 267-amino-acid polypeptide reads, in one-letter code: Transcription factor LBX1 (267 aa).

A compositionally biased stretch (basic and acidic residues) spans 1–21 (MTSKDEAKSSASSVEERRRNA). The tract at residues 1–36 (MTSKDEAKSSASSVEERRRNALDLLPPPANSNKPLT) is disordered. The homeobox DNA-binding region spans 127–186 (RRKSRTAFTNHQIYELEKRFLYQKYLSPADRDQIAQQLGLTNAQVITWFQNRRAKLKRDL). The segment at 211-267 (SELEESGSERGNSRSRSPQLGLTSNHMPLSPSXPLTDQHASKECSEDEEDVEIDVDD) is disordered. Positions 228-237 (PQLGLTSNHM) are enriched in polar residues. Residues 255 to 267 (SEDEEDVEIDVDD) are compositionally biased toward acidic residues.

In terms of tissue distribution, expressed in all myoblasts that will populate body wall muscles as well as in a group of cells the migrate into the head.

It is found in the nucleus. Functionally, transcription factor that controls hypaxial muscle development by down-regulating myod1 and cdkn1b/p27, thereby allowing myoblasts to proliferate before the onset of terminal differentiation. This Xenopus laevis (African clawed frog) protein is Transcription factor LBX1.